Consider the following 248-residue polypeptide: Ubiquinone/menaquinone biosynthesis C-methyltransferase UbiE (248 aa).

Residues serine 68, aspartate 92, and asparagine 120–alanine 121 each bind S-adenosyl-L-methionine.

It belongs to the class I-like SAM-binding methyltransferase superfamily. MenG/UbiE family.

It carries out the reaction a 2-demethylmenaquinol + S-adenosyl-L-methionine = a menaquinol + S-adenosyl-L-homocysteine + H(+). It catalyses the reaction a 2-methoxy-6-(all-trans-polyprenyl)benzene-1,4-diol + S-adenosyl-L-methionine = a 5-methoxy-2-methyl-3-(all-trans-polyprenyl)benzene-1,4-diol + S-adenosyl-L-homocysteine + H(+). The protein operates within quinol/quinone metabolism; menaquinone biosynthesis; menaquinol from 1,4-dihydroxy-2-naphthoate: step 2/2. It participates in cofactor biosynthesis; ubiquinone biosynthesis. Methyltransferase required for the conversion of demethylmenaquinol (DMKH2) to menaquinol (MKH2) and the conversion of 2-polyprenyl-6-methoxy-1,4-benzoquinol (DDMQH2) to 2-polyprenyl-3-methyl-6-methoxy-1,4-benzoquinol (DMQH2). This chain is Ubiquinone/menaquinone biosynthesis C-methyltransferase UbiE, found in Rickettsia prowazekii (strain Madrid E).